The chain runs to 228 residues: Putative L-ribulose-5-phosphate 4-epimerase UlaF (228 aa).

Substrate is bound by residues 26–27 (GN), 43–44 (SG), and 72–73 (SS). The Zn(2+) site is built by aspartate 74, histidine 93, and histidine 95. Residue aspartate 118 is the Proton donor/acceptor of the active site. Position 167 (histidine 167) interacts with Zn(2+). Catalysis depends on tyrosine 225, which acts as the Proton donor/acceptor.

This sequence belongs to the aldolase class II family. AraD/FucA subfamily. Requires Zn(2+) as cofactor.

It carries out the reaction L-ribulose 5-phosphate = D-xylulose 5-phosphate. It participates in cofactor degradation; L-ascorbate degradation; D-xylulose 5-phosphate from L-ascorbate: step 4/4. Its function is as follows. Catalyzes the isomerization of L-ribulose 5-phosphate to D-xylulose 5-phosphate. Is involved in the anaerobic L-ascorbate utilization. This Shigella boydii serotype 4 (strain Sb227) protein is Putative L-ribulose-5-phosphate 4-epimerase UlaF.